The sequence spans 315 residues: Acetyl-coenzyme A carboxylase carboxyl transferase subunit alpha (315 aa).

The region spanning 38 to 292 (RLQKKSNELT…KLRLKEDLAE (255 aa)) is the CoA carboxyltransferase C-terminal domain.

It belongs to the AccA family. In terms of assembly, acetyl-CoA carboxylase is a heterohexamer composed of biotin carboxyl carrier protein (AccB), biotin carboxylase (AccC) and two subunits each of ACCase subunit alpha (AccA) and ACCase subunit beta (AccD).

It localises to the cytoplasm. It carries out the reaction N(6)-carboxybiotinyl-L-lysyl-[protein] + acetyl-CoA = N(6)-biotinyl-L-lysyl-[protein] + malonyl-CoA. It participates in lipid metabolism; malonyl-CoA biosynthesis; malonyl-CoA from acetyl-CoA: step 1/1. In terms of biological role, component of the acetyl coenzyme A carboxylase (ACC) complex. First, biotin carboxylase catalyzes the carboxylation of biotin on its carrier protein (BCCP) and then the CO(2) group is transferred by the carboxyltransferase to acetyl-CoA to form malonyl-CoA. This Haemophilus influenzae (strain PittEE) protein is Acetyl-coenzyme A carboxylase carboxyl transferase subunit alpha.